The primary structure comprises 154 residues: Ribosome maturation factor RimP (154 aa).

It belongs to the RimP family.

The protein localises to the cytoplasm. Required for maturation of 30S ribosomal subunits. The polypeptide is Ribosome maturation factor RimP (Clostridium perfringens (strain SM101 / Type A)).